The following is a 310-amino-acid chain: tRNA pseudouridine synthase B (310 aa).

The active-site Nucleophile is Asp47.

This sequence belongs to the pseudouridine synthase TruB family. Type 1 subfamily.

It carries out the reaction uridine(55) in tRNA = pseudouridine(55) in tRNA. In terms of biological role, responsible for synthesis of pseudouridine from uracil-55 in the psi GC loop of transfer RNAs. The chain is tRNA pseudouridine synthase B from Caulobacter vibrioides (strain ATCC 19089 / CIP 103742 / CB 15) (Caulobacter crescentus).